Here is a 230-residue protein sequence, read N- to C-terminus: 2,3-bisphosphoglycerate-dependent phosphoglycerate mutase (230 aa).

Substrate-binding positions include 10-17, 23-24, R62, 89-92, K100, 116-117, and 185-186; these read RHGQSKWN, TG, ERHY, RR, and GN. H11 acts as the Tele-phosphohistidine intermediate in catalysis. E89 serves as the catalytic Proton donor/acceptor.

It belongs to the phosphoglycerate mutase family. BPG-dependent PGAM subfamily. In terms of assembly, homodimer.

The enzyme catalyses (2R)-2-phosphoglycerate = (2R)-3-phosphoglycerate. It functions in the pathway carbohydrate degradation; glycolysis; pyruvate from D-glyceraldehyde 3-phosphate: step 3/5. In terms of biological role, catalyzes the interconversion of 2-phosphoglycerate and 3-phosphoglycerate. The sequence is that of 2,3-bisphosphoglycerate-dependent phosphoglycerate mutase from Buchnera aphidicola subsp. Schizaphis graminum (strain Sg).